We begin with the raw amino-acid sequence, 123 residues long: Small ribosomal subunit protein uS13 (123 aa).

The segment at 97 to 123 is disordered; it reads PVRGQRTKTNARTRKGPRKTVGVRRKK.

This sequence belongs to the universal ribosomal protein uS13 family. As to quaternary structure, part of the 30S ribosomal subunit. Forms a loose heterodimer with protein S19. Forms two bridges to the 50S subunit in the 70S ribosome.

Located at the top of the head of the 30S subunit, it contacts several helices of the 16S rRNA. In the 70S ribosome it contacts the 23S rRNA (bridge B1a) and protein L5 of the 50S subunit (bridge B1b), connecting the 2 subunits; these bridges are implicated in subunit movement. Contacts the tRNAs in the A and P-sites. This Pelotomaculum thermopropionicum (strain DSM 13744 / JCM 10971 / SI) protein is Small ribosomal subunit protein uS13.